The sequence spans 485 residues: Zinc finger protein 639 (485 aa).

Over residues 1–14 (MSEYPKKRKRKTLH) the composition is skewed to basic residues. Disordered stretches follow at residues 1 to 23 (MSEYPKKRKRKTLHPSRYSDSSG) and 54 to 82 (DNKDDDSDPETANDLPKFTDGTKARSRSQ). A Phosphoserine modification is found at Ser-60. Lys-76 participates in a covalent cross-link: Glycyl lysine isopeptide (Lys-Gly) (interchain with G-Cter in SUMO2). Phosphoserine is present on Ser-88. Residues Lys-177, Lys-181, and Lys-226 each participate in a glycyl lysine isopeptide (Lys-Gly) (interchain with G-Cter in SUMO2) cross-link. C2H2-type zinc fingers lie at residues 204–227 (YKCELCEFNSKYFSDLKQHVILKH), 233–255 (NVCRVCKESFSTNMLLIEHAKLH), 260–283 (YICKYCDYKTVIFENLSQHIADTH), 289–311 (YWCEQCDVQFSSSSELYLHFQEH), 374–397 (FVCQVCGFRSRLHTNVNRHVAIEH), 403–425 (HVCDDCGKGFSSMLEYCKHLNSH), 431–454 (YLCQYCEYSTGQIEDLKIHLDFKH), and 460–482 (HKCSDCLMRFGNERELISHLPVH). The interval 371–455 (KNFFVCQVCG…LKIHLDFKHS (85 aa)) is interaction with CTNNA2.

Belongs to the krueppel C2H2-type zinc-finger protein family. As to quaternary structure, interacts with CTNNA2.

The protein localises to the nucleus. In terms of biological role, binds DNA and may function as a transcriptional repressor. The protein is Zinc finger protein 639 (Znf639) of Rattus norvegicus (Rat).